The chain runs to 426 residues: Cephalotocin receptor 2 (426 aa).

At 1–51 (MYQAMEVESTSPSGFFLDFYTQSTIPTTDFLNNTNSSHPIRDEKLVKIEIA) the chain is on the extracellular side. 2 N-linked (GlcNAc...) asparagine glycosylation sites follow: Asn-32 and Asn-35. A helical transmembrane segment spans residues 52-72 (VLGTCFTLAIINNLCVLLVLL). The Cytoplasmic portion of the chain corresponds to 73 to 84 (WRRKKVRRMQMF). The helical transmembrane segment at 85 to 105 (ILHLSIADLIVAFFNILPQLI) threads the bilayer. The Extracellular portion of the chain corresponds to 106–120 (WDITFRFMAGDAMCR). Cysteines 119 and 198 form a disulfide. The helical transmembrane segment at 121–141 (FIKYAQMFSLYLSTYILIMTA) threads the bilayer. Topologically, residues 142–165 (VDRYRAICHPLSNQTWTPCMVYCK) are cytoplasmic. Residues 166 to 186 (IFIAYAIATIFSIPQAILFQM) traverse the membrane as a helical segment. Residues 187–208 (QEVNEGSGIYDCWVHFEPAWVL) lie on the Extracellular side of the membrane. The chain crosses the membrane as a helical span at residues 209-229 (TAYALYIFFALYLIPILILFF). Over 230–288 (TYGSICYTIWAKYRHAIKTKKDANTRYPQRRKKKGVILRTHSVHGFSKAKLNSVKLTFA) the chain is Cytoplasmic. Residues 289-309 (VIVTYIICWSPFFVSQIWWLF) form a helical membrane-spanning segment. Residues 310–319 (DETVVGNAGV) lie on the Extracellular side of the membrane. The chain crosses the membrane as a helical span at residues 320-340 (VVILLMACLNSCTNPWIYLIF). Topologically, residues 341–426 (NRNYISNVLP…DQFIYSDKTT (86 aa)) are cytoplasmic. Positions 373–426 (GSVRRDSRKTSDPKRISESRRISDARRISGKTQKNNSSSPRKTSDQFIYSDKTT) are disordered. The segment covering 375–399 (VRRDSRKTSDPKRISESRRISDARR) has biased composition (basic and acidic residues). A compositionally biased stretch (polar residues) spans 402-426 (GKTQKNNSSSPRKTSDQFIYSDKTT).

This sequence belongs to the G-protein coupled receptor 1 family. Vasopressin/oxytocin receptor subfamily. As to expression, present in various peripheral tissues with highest expression in branchia and vas deferens. Very low expression detected in nervous system.

It localises to the cell membrane. In terms of biological role, acts as a receptor for cephalotocin. In Octopus vulgaris (Common octopus), this protein is Cephalotocin receptor 2.